Here is a 330-residue protein sequence, read N- to C-terminus: Aspartate--ammonia ligase (330 aa).

The protein belongs to the class-II aminoacyl-tRNA synthetase family. AsnA subfamily.

It is found in the cytoplasm. The catalysed reaction is L-aspartate + NH4(+) + ATP = L-asparagine + AMP + diphosphate + H(+). It functions in the pathway amino-acid biosynthesis; L-asparagine biosynthesis; L-asparagine from L-aspartate (ammonia route): step 1/1. This is Aspartate--ammonia ligase from Enterobacter sp. (strain 638).